A 62-amino-acid polypeptide reads, in one-letter code: Pro-MCH variant (62 aa).

Residues 23–41 (GSVAFPAENGVQDTESTQE) form an NGE-like region. Residues 29 to 62 (AENGVQDTESTQEKRETGDEENSAKFPIGRRDFD) are disordered. The segment at 44–56 (ETGDEENSAKFPI) is NEI-like. Residues 60–62 (DFD) form a melanin-concentrating hormone-like region.

The protein belongs to the melanin-concentrating hormone family.

The chain is Pro-MCH variant (PMCHL1) from Pan paniscus (Pygmy chimpanzee).